Consider the following 652-residue polypeptide: MESISQYAWLIPIFPLAGSLLIGIGLISFRRATNILRWRYSFLIIALLGISLILSCLILFSQINATPSYQWIFQWIVTNNFLLEIGYFVDPLTAVMLVIVTTVAILVLIYTDGYMSYDEGYVRFFAYLSLFTTSMLGLVLSPNLLQIYVFWELVGMCSYLLIGFWFTRPAAADACQKAFVTNRVGDFGLLLGILGFYWMTGSFEFDVISMKLLQLAEYDNFNTQLAIFFGFLIFLGPVAKSAQFPLHVWLPDAMEGPTPISALIHAATMVAAGVFLVARMFPIFSQFPFLMDLIAWTGAITAIIGATIAVTQVDLKKGLAYSTMSQLGYMIMAMGMGSYTASLFHLMTHAYSKALLFLSAGSTIHGMEPIVGFNPAKNQNMSLMGGIRKYMPITGNAFLIGTLSLCGIPPLACFWSKDAILSNAFVHSPLLWFIGWSTAGLTSFYMFRMYFLVFEGEFRGNSVNQEKIRSNKLPKESNTKMTLPLIILTLFSITIGWIGTPFNNQFMFLIHTINQEIEPFDINEFLFIAGSSVGIALLGCYTAYLIYIKDKNTDKFANLLQPFYQLSFNKWYIDDIYEYIFVKGNRQLAQQTLLFDKKIIDGFVNLTGLITLVSSESLRSIENGKIQSYILMIIFTLLTILGISQTYYSLIL.

A run of 16 helical transmembrane segments spans residues 9 to 29 (WLIP…LISF), 40 to 60 (YSFL…LILF), 91 to 111 (PLTA…LIYT), 124 to 144 (FFAY…SPNL), 147 to 167 (IYVF…FWFT), 188 to 208 (GLLL…FDVI), 225 to 245 (LAIF…AQFP), 258 to 278 (TPIS…FLVA), 289 to 309 (FLMD…ATIA), 327 to 347 (LGYM…FHLM), 354 to 374 (ALLF…VGFN), 395 to 415 (GNAF…ACFW), 424 to 444 (AFVH…LTSF), 482 to 502 (TLPL…GTPF), 526 to 546 (LFIA…AYLI), and 630 to 650 (ILMI…YYSL).

Belongs to the complex I subunit 5 family. In terms of assembly, NDH is composed of at least 16 different subunits, 5 of which are encoded in the nucleus.

The protein resides in the plastid. It is found in the chloroplast thylakoid membrane. The catalysed reaction is a plastoquinone + NADH + (n+1) H(+)(in) = a plastoquinol + NAD(+) + n H(+)(out). It carries out the reaction a plastoquinone + NADPH + (n+1) H(+)(in) = a plastoquinol + NADP(+) + n H(+)(out). In terms of biological role, NDH shuttles electrons from NAD(P)H:plastoquinone, via FMN and iron-sulfur (Fe-S) centers, to quinones in the photosynthetic chain and possibly in a chloroplast respiratory chain. The immediate electron acceptor for the enzyme in this species is believed to be plastoquinone. Couples the redox reaction to proton translocation, and thus conserves the redox energy in a proton gradient. This Mesostigma viride (Green alga) protein is NAD(P)H-quinone oxidoreductase subunit 5, chloroplastic (ndhF).